The primary structure comprises 216 residues: U1 small nuclear ribonucleoprotein C (216 aa).

A Matrin-type zinc finger spans residues 4–36 (FFCDYCDVYLTHDSMSVRKAHNSGRNHLRNVVD). Disordered stretches follow at residues 70-89 (PQNQ…PGAG) and 125-216 (PGGI…ADKR). Pro residues-rich tracts occupy residues 140-149 (PPMPPFPGMP) and 157-204 (GVPP…PPFG).

This sequence belongs to the U1 small nuclear ribonucleoprotein C family. U1 snRNP is composed of the 7 core Sm proteins B/B', D1, D2, D3, E, F and G that assemble in a heptameric protein ring on the Sm site of the small nuclear RNA to form the core snRNP, and at least 3 U1 snRNP-specific proteins U1-70K, U1-A and U1-C. U1-C interacts with U1 snRNA and the 5' splice-site region of the pre-mRNA.

It localises to the nucleus. Component of the spliceosomal U1 snRNP, which is essential for recognition of the pre-mRNA 5' splice-site and the subsequent assembly of the spliceosome. U1-C is directly involved in initial 5' splice-site recognition for both constitutive and regulated alternative splicing. The interaction with the 5' splice-site seems to precede base-pairing between the pre-mRNA and the U1 snRNA. Stimulates commitment or early (E) complex formation by stabilizing the base pairing of the 5' end of the U1 snRNA and the 5' splice-site region. The chain is U1 small nuclear ribonucleoprotein C from Neurospora crassa (strain ATCC 24698 / 74-OR23-1A / CBS 708.71 / DSM 1257 / FGSC 987).